Reading from the N-terminus, the 1161-residue chain is DNA-directed RNA polymerase subunit beta (1161 aa).

This sequence belongs to the RNA polymerase beta chain family. The RNAP catalytic core consists of 2 alpha, 1 beta, 1 beta' and 1 omega subunit. When a sigma factor is associated with the core the holoenzyme is formed, which can initiate transcription.

It carries out the reaction RNA(n) + a ribonucleoside 5'-triphosphate = RNA(n+1) + diphosphate. Functionally, DNA-dependent RNA polymerase catalyzes the transcription of DNA into RNA using the four ribonucleoside triphosphates as substrates. This Streptomyces avermitilis (strain ATCC 31267 / DSM 46492 / JCM 5070 / NBRC 14893 / NCIMB 12804 / NRRL 8165 / MA-4680) protein is DNA-directed RNA polymerase subunit beta.